Reading from the N-terminus, the 287-residue chain is Cyclopropane mycolic acid synthase MmaA2 (287 aa).

S-adenosyl-L-methionine contacts are provided by residues 33-34 (YS), 72-74 (GCG), 94-99 (TLSKNQ), 123-124 (WE), and Ile136. Cys269 is a catalytic residue.

The protein belongs to the CFA/CMAS family.

The catalysed reaction is a 1-acyl-2-(9Z)-enoyl-sn-glycero-3-phospholipid + S-adenosyl-L-methionine = a 1-acyl-2-(9-cyclopronane)-acyl-sn-glycero-3-phospholipid + S-adenosyl-L-homocysteine + H(+). It participates in lipid metabolism; mycolic acid biosynthesis. Its function is as follows. Catalyzes the conversion of a double bond to a cis cyclopropane ring at the distal position of an alpha mycolic acid via the transfer of a methylene group from S-adenosyl-L-methionine. MmaA2 also catalyzes the biosynthesis of the cis-cyclopropanated methoxymycolates. Cyclopropanated mycolic acids are key factors participating in cell envelope permeability, host immunomodulation and persistence. The polypeptide is Cyclopropane mycolic acid synthase MmaA2 (mmaA2) (Mycobacterium tuberculosis (strain ATCC 25177 / H37Ra)).